The following is a 557-amino-acid chain: Coiled-coil domain-containing protein 22 homolog (557 aa).

Coiled-coil stretches lie at residues 260 to 350 (RLGQ…LQSQ) and 489 to 554 (ELTA…AGRN).

The protein belongs to the CCDC22 family.

The chain is Coiled-coil domain-containing protein 22 homolog from Anopheles gambiae (African malaria mosquito).